Reading from the N-terminus, the 111-residue chain is Cyanovirin-N homolog (111 aa).

It belongs to the cyanovirin-N family.

In terms of biological role, mannose-binding lectin. The chain is Cyanovirin-N homolog from Neurospora crassa (strain ATCC 24698 / 74-OR23-1A / CBS 708.71 / DSM 1257 / FGSC 987).